A 398-amino-acid polypeptide reads, in one-letter code: Autophagy-related protein 39 (398 aa).

Positions 8 to 11 match the ATG8-binding motif; it reads WNLV. Residues 15-50 form a disordered region; it reads RLRKGREGEEQSSKSEISLDSLHESSFAGEDDEDFD. The short motif at 52-59 is the ATG11-binding element; the sequence is DVLSNTSS. A helical transmembrane segment spans residues 148–164; the sequence is VIMLSSLLSMTFSYLAL.

Interacts with ATG8 and ATG11.

It is found in the endoplasmic reticulum membrane. Its subcellular location is the preautophagosomal structure membrane. Its function is as follows. Acts as a receptor for reticulophagy and nucleophagy. Directs autophagic sequestration of double-membrane vesicles derived from the nuclear envelope and perinuclear endoplasmic reticulum (pnER) into autophagosomes. Is not required for the cytoplasm-to-vacuole targeting pathway, mitophagy, pexophagy, and non-selective autophagy. The protein is Autophagy-related protein 39 of Saccharomyces cerevisiae (strain ATCC 204508 / S288c) (Baker's yeast).